The sequence spans 387 residues: Phosphoglycerate kinase (387 aa).

Residues 21–23 (DLN), arginine 36, 59–62 (HLGR), arginine 113, and arginine 146 each bind substrate. Residues lysine 197, glutamate 314, and 340-343 (GGDT) each bind ATP.

Belongs to the phosphoglycerate kinase family. In terms of assembly, monomer.

Its subcellular location is the cytoplasm. The catalysed reaction is (2R)-3-phosphoglycerate + ATP = (2R)-3-phospho-glyceroyl phosphate + ADP. It participates in carbohydrate degradation; glycolysis; pyruvate from D-glyceraldehyde 3-phosphate: step 2/5. The sequence is that of Phosphoglycerate kinase from Aeromonas hydrophila subsp. hydrophila (strain ATCC 7966 / DSM 30187 / BCRC 13018 / CCUG 14551 / JCM 1027 / KCTC 2358 / NCIMB 9240 / NCTC 8049).